Here is a 462-residue protein sequence, read N- to C-terminus: Cytochrome P450 20A1 (462 aa).

The helical transmembrane segment at F4–P24 threads the bilayer. Residue C409 coordinates heme.

This sequence belongs to the cytochrome P450 family. Heme serves as cofactor.

Its subcellular location is the membrane. This Rattus norvegicus (Rat) protein is Cytochrome P450 20A1 (Cyp20a1).